The chain runs to 419 residues: MSYIIDRRLNSKKKSMVNRQRFLRRYQQHIKKAVSDAVDRRSITDIESGESISIPTRDISEPIFHHGSGGKNNRVLPGNDRFNGGDHIERPEQGQGGGGNGSGASDSGEGEDDFVFQISQEEFLNFLFEDLALPNLVKRQLAGNEEFEFRRAGISNEGSPGKINIIRSLRSANSRRIALTGKKRRRLKEVEAELEILEPESAEAQALLAEAEELHAKIKRIPWLDDFDLKYNLHVKHPLPTSKAVMFCLMDVSGSMDQATKDIAKRFFLLLYLFLQRNYERTEVVFIRHHTSAKEVDEQEFFYSRETGGTIVSSALKMMDDILQTRYPASEWNIYGAQASDGDNWNDDSVICYRLLTEKLLPKVQYYSYIEITTRERQALWHAYEQVLSDFPNTFAMRQLQSAADIYPVFRQLFQKQTT.

The segment at I63–E111 is disordered. The segment covering N83–E92 has biased composition (basic and acidic residues).

The protein belongs to the UPF0229 family.

This chain is UPF0229 protein TERTU_3150, found in Teredinibacter turnerae (strain ATCC 39867 / T7901).